Reading from the N-terminus, the 259-residue chain is Global transcriptional regulator CodY (259 aa).

The tract at residues 1 to 155 is GAF domain; that stretch reads MALLQKTRII…GATVVGMEIL (155 aa). Positions 203–222 form a DNA-binding region, H-T-H motif; the sequence is ASKIADRVGITRSVIVNALR. A Phosphoserine modification is found at serine 215.

It belongs to the CodY family.

The protein localises to the cytoplasm. DNA-binding global transcriptional regulator which is involved in the adaptive response to starvation and acts by directly or indirectly controlling the expression of numerous genes in response to nutrient availability. During rapid exponential growth, CodY is highly active and represses genes whose products allow adaptation to nutrient depletion. The chain is Global transcriptional regulator CodY from Bacillus velezensis (strain DSM 23117 / BGSC 10A6 / LMG 26770 / FZB42) (Bacillus amyloliquefaciens subsp. plantarum).